The chain runs to 207 residues: Outer-membrane lipoprotein LolB (207 aa).

A signal peptide spans 1-21; it reads MPMRKRHFYRLLPLASLLLAA. A lipid anchor (N-palmitoyl cysteine) is attached at C22. C22 carries S-diacylglycerol cysteine lipidation.

Belongs to the LolB family. As to quaternary structure, monomer.

It is found in the cell outer membrane. In terms of biological role, plays a critical role in the incorporation of lipoproteins in the outer membrane after they are released by the LolA protein. This chain is Outer-membrane lipoprotein LolB, found in Yersinia pestis bv. Antiqua (strain Antiqua).